Here is a 786-residue protein sequence, read N- to C-terminus: Endonuclease MutS2 (786 aa).

Residue 335–342 (GPNTGGKT) coordinates ATP. The region spanning 711–786 (LDLRGERFEN…GLGVTVVELK (76 aa)) is the Smr domain.

The protein belongs to the DNA mismatch repair MutS family. MutS2 subfamily. As to quaternary structure, homodimer. Binds to stalled ribosomes, contacting rRNA.

Functionally, endonuclease that is involved in the suppression of homologous recombination and thus may have a key role in the control of bacterial genetic diversity. Its function is as follows. Acts as a ribosome collision sensor, splitting the ribosome into its 2 subunits. Detects stalled/collided 70S ribosomes which it binds and splits by an ATP-hydrolysis driven conformational change. Acts upstream of the ribosome quality control system (RQC), a ribosome-associated complex that mediates the extraction of incompletely synthesized nascent chains from stalled ribosomes and their subsequent degradation. Probably generates substrates for RQC. This is Endonuclease MutS2 from Bacillus cereus (strain B4264).